Consider the following 138-residue polypeptide: Basic phospholipase A2 Sct-N6 (138 aa).

A signal peptide spans 1–16 (MRTFWIVAVLLVGVEG). Cystine bridges form between Cys-42–Cys-131, Cys-44–Cys-60, Cys-59–Cys-111, Cys-65–Cys-138, Cys-66–Cys-104, Cys-73–Cys-97, and Cys-91–Cys-102. Ca(2+) contacts are provided by Tyr-43, Gly-45, and Gly-47. His-63 is a catalytic residue. Asp-64 provides a ligand contact to Ca(2+). The active site involves Asp-105.

It belongs to the phospholipase A2 family. Group II subfamily. D49 sub-subfamily. It depends on Ca(2+) as a cofactor. Expressed by the venom gland.

The protein resides in the secreted. It catalyses the reaction a 1,2-diacyl-sn-glycero-3-phosphocholine + H2O = a 1-acyl-sn-glycero-3-phosphocholine + a fatty acid + H(+). Its function is as follows. Snake venom phospholipase A2 (PLA2) that displays edema-inducing activities, as well as presynaptic neurotoxicity and low myotoxicity. PLA2 catalyzes the calcium-dependent hydrolysis of the 2-acyl groups in 3-sn-phosphoglycerides. The polypeptide is Basic phospholipase A2 Sct-N6 (Sistrurus tergeminus (Western massasauga)).